Consider the following 1131-residue polypeptide: Replication factor C subunit 1 (1131 aa).

Disordered stretches follow at residues 14–87 (KKPV…KSEK), 92–111 (YKPGKVSQKDPVTYVSETDE), 120–201 (AASK…NDEA), and 225–378 (ARTL…NYQA). The segment covering 38-54 (GVKEAKVNNSGKEDASK) has biased composition (basic and acidic residues). A Glycyl lysine isopeptide (Lys-Gly) (interchain with G-Cter in SUMO2) cross-link involves residue lysine 49. Tyrosine 66 is subject to Phosphotyrosine. Phosphoserine is present on residues serine 68, serine 70, serine 72, and serine 107. The residue at position 109 (threonine 109) is a Phosphothreonine. Residues 127–138 (NGVSTNSYLGTS) show a composition bias toward polar residues. Phosphoserine is present on serine 155. Phosphothreonine occurs at positions 160 and 162. Phosphoserine is present on residues serine 163, serine 172, serine 189, serine 244, serine 250, serine 253, serine 281, and serine 309. Residues 184–201 (KRKESSQNTEDSRLNDEA) show a composition bias toward basic and acidic residues. The segment covering 308–319 (SSPKASAKLALM) has biased composition (low complexity). Basic and acidic residues-rich tracts occupy residues 334-350 (AARRKESATEPKGEKTT) and 359-373 (TKRESVSPEDSEKKR). Residues 354–528 (TKVSPTKRES…KKESESKKCK (175 aa)) are interferon-stimulated-response-element binding region. Serine 365 bears the Phosphoserine mark. Positions 399-489 (GAENCLEGLT…PGKRSKYEMA (91 aa)) constitute a BRCT domain. Positions 491-525 (EAEMKKEKSKLERTPQKNDQGKRKISPAKKESESK) are disordered. Residue serine 535 is modified to Phosphoserine. An ATP-binding site is contributed by 635 to 642 (GPPGVGKT). The disordered stretch occupies residues 1073–1131 (PALDSEYSEEFQEDDTQSEKEQDAVETDAMIKKKTRSSKPSKSEREKESKKGKGKNWKK). A compositionally biased stretch (acidic residues) spans 1078-1088 (EYSEEFQEDDT). A Phosphoserine modification is found at serine 1090. A Nuclear localization signal motif is present at residues 1104 to 1108 (KKKTR). A compositionally biased stretch (basic and acidic residues) spans 1113–1123 (SKSEREKESKK).

Belongs to the activator 1 large subunit family. Large subunit of the RFC complex, an heteropentameric complex consisting of RFC1 and four small subunits RFC2, RFC3, RFC4 and RFC5; the RFC complex interacts with PCNA and the interaction involves RFC1.

It localises to the nucleus. Its function is as follows. Subunit of the replication factor C (RFC) complex which acts during elongation of primed DNA templates by DNA polymerases delta and epsilon, and is necessary for ATP-dependent loading of proliferating cell nuclear antigen (PCNA) onto primed DNA. This subunit binds to the primer-template junction. Binds the PO-B transcription element as well as other GA rich DNA sequences. Can bind single- or double-stranded DNA. The chain is Replication factor C subunit 1 (Rfc1) from Mus musculus (Mouse).